The sequence spans 902 residues: Cytosolic carboxypeptidase 2 (902 aa).

The 271-residue stretch at 396–666 (YPYTYTDLQC…HVCDTLLDFC (271 aa)) folds into the Peptidase M14 domain. Zn(2+)-binding residues include histidine 462, glutamate 465, and histidine 558. Glutamate 630 acts as the Proton donor/acceptor in catalysis. Over residues 746-758 (FKKKKKKSLQTRK) the composition is skewed to basic residues. Disordered stretches follow at residues 746 to 770 (FKKKKKKSLQTRKQRNEQYQKKNLM) and 796 to 879 (FKNS…PRSR). Residues 853 to 866 (VSCSPKRTINSSQE) show a composition bias toward polar residues.

It belongs to the peptidase M14 family. In terms of assembly, interacts with RARRES1, KIF11 AND MAPRE1. Zn(2+) serves as cofactor.

The protein resides in the cytoplasm. The protein localises to the cytosol. It localises to the cytoskeleton. Its subcellular location is the microtubule organizing center. It is found in the centrosome. The protein resides in the centriole. The protein localises to the cilium basal body. It catalyses the reaction (L-glutamyl)(n+1)-gamma-L-glutamyl-L-glutamyl-[protein] + H2O = (L-glutamyl)(n)-gamma-L-glutamyl-L-glutamyl-[protein] + L-glutamate. Inhibited by RARRES1. Its function is as follows. Metallocarboxypeptidase that mediates deglutamylation of tubulin and non-tubulin target proteins. Catalyzes the removal of polyglutamate side chains present on the gamma-carboxyl group of glutamate residues within the C-terminal tail of tubulin protein. Specifically cleaves tubulin long-side-chains, while it is not able to remove the branching point glutamate. Also catalyzes the removal of polyglutamate residues from the carboxy-terminus of non-tubulin proteins such as MYLK. The polypeptide is Cytosolic carboxypeptidase 2 (Homo sapiens (Human)).